The following is a 165-amino-acid chain: Chorismate pyruvate-lyase (165 aa).

Substrate contacts are provided by methionine 35, arginine 77, leucine 115, and glutamate 156.

It belongs to the UbiC family. Monomer.

The protein resides in the cytoplasm. The catalysed reaction is chorismate = 4-hydroxybenzoate + pyruvate. It participates in cofactor biosynthesis; ubiquinone biosynthesis. In terms of biological role, removes the pyruvyl group from chorismate, with concomitant aromatization of the ring, to provide 4-hydroxybenzoate (4HB) for the ubiquinone pathway. The chain is Chorismate pyruvate-lyase from Enterobacter sp. (strain 638).